The following is a 401-amino-acid chain: MSREVYICDAVRTPIGRFGGSLAAVRADDLAAVPVKALVERNPQVDWSQLDEVYLGCANQAGEDNRNVARMALLLAGLPDSVPGVTLNRLCASGMDAVGTAFRAIASGEAELVIAGGVESMSRAPYVMGKADSAFGRGQKIEDTTIGWRFINPLMKAQYGVDAMPETADNVADDYKVSRADQDAFALRSQQLAGRAQAAGYFAEEIVPVVIKGKKGETVVDADEHLRPDTTLEALAKLKPVNGPDKTVTAGNASGVNDGSVALILASAEAVKKHGLKARAKVLGMASAGVAPRVMGIGPVPAVRKLLERLNLSVADFDVIELNEAFAAQGLAVTRELGIADDDARVNPNGGAIALGHPLGASGARLVLTAVHQLEKSGGQRGLCTMCVGVGQGVALAVERV.

Cys-91 serves as the catalytic Acyl-thioester intermediate. Residues His-357 and Cys-387 each act as proton acceptor in the active site.

Belongs to the thiolase-like superfamily. Thiolase family. As to quaternary structure, homotetramer.

The catalysed reaction is succinyl-CoA + acetyl-CoA = 3-oxoadipyl-CoA + CoA. It participates in aromatic compound metabolism; beta-ketoadipate pathway; acetyl-CoA and succinyl-CoA from 3-oxoadipate: step 2/2. In terms of biological role, catalyzes thiolytic cleavage of beta-ketoadipyl-CoA to succinyl-CoA and acetyl-CoA. The polypeptide is Beta-ketoadipyl-CoA thiolase (pcaF) (Pseudomonas knackmussii (strain DSM 6978 / CCUG 54928 / LMG 23759 / B13)).